Consider the following 255-residue polypeptide: L-seryl-tRNA(Sec) kinase (255 aa).

7 to 14 (GLPSVGKS) provides a ligand contact to ATP.

Belongs to the L-seryl-tRNA(Sec) kinase family.

The enzyme catalyses L-seryl-tRNA(Sec) + ATP = O-phospho-L-seryl-tRNA(Sec) + ADP. It participates in aminoacyl-tRNA biosynthesis; selenocysteinyl-tRNA(Sec) biosynthesis; selenocysteinyl-tRNA(Sec) from L-seryl-tRNA(Sec) (archaeal/eukaryal route): step 1/2. Its function is as follows. Specifically phosphorylates seryl-tRNA(Sec) to O-phosphoseryl-tRNA(Sec), an activated intermediate for selenocysteine biosynthesis. This Methanococcus maripaludis (strain DSM 14266 / JCM 13030 / NBRC 101832 / S2 / LL) protein is L-seryl-tRNA(Sec) kinase (pstK).